We begin with the raw amino-acid sequence, 335 residues long: Sphingomyelinase C (335 aa).

The signal sequence occupies residues 1 to 28 (MEKFKIIKTIPKICGAFIFLLFFTFLFG).

This sequence belongs to the neutral sphingomyelinase family.

It localises to the secreted. It carries out the reaction a sphingomyelin + H2O = phosphocholine + an N-acylsphing-4-enine + H(+). Virulence factor that promotes intracellular proliferation by mediating the disruption of the phagocytic vacuole and the release of bacteria into the host cell cytosol. May act in concert with the phospholipases PlcA and PlcB and the hemolysin hly to mediate efficient escape from the vacuole. This is Sphingomyelinase C (smcL) from Listeria ivanovii.